A 364-amino-acid chain; its full sequence is DNA polymerase IV (364 aa).

The 185-residue stretch at 14-198 (IIHIDMDAFF…LPIEKFHGVG (185 aa)) folds into the UmuC domain. The Mg(2+) site is built by aspartate 18 and aspartate 116. Glutamate 117 is a catalytic residue.

It belongs to the DNA polymerase type-Y family. As to quaternary structure, monomer. Mg(2+) serves as cofactor.

Its subcellular location is the cytoplasm. The catalysed reaction is DNA(n) + a 2'-deoxyribonucleoside 5'-triphosphate = DNA(n+1) + diphosphate. Functionally, poorly processive, error-prone DNA polymerase involved in untargeted mutagenesis. Copies undamaged DNA at stalled replication forks, which arise in vivo from mismatched or misaligned primer ends. These misaligned primers can be extended by PolIV. Exhibits no 3'-5' exonuclease (proofreading) activity. May be involved in translesional synthesis, in conjunction with the beta clamp from PolIII. This Streptococcus pyogenes serotype M28 (strain MGAS6180) protein is DNA polymerase IV.